Here is a 216-residue protein sequence, read N- to C-terminus: Adenylate kinase (216 aa).

10–15 is an ATP binding site; it reads GAGKGT. Residues 30–59 form an NMP region; it reads STGDIFRKNISENTPLGIEAKSYMDNGQLV. Residues Thr31, Arg36, 57–59, 85–88, and Gln92 contribute to the AMP site; these read QLV and GFPR. An LID region spans residues 126–163; it reads GRRVCPSCGASYHIKFNPPTNDGKCDLCGSDVIQRKDD. Arg127 provides a ligand contact to ATP. Cys130 and Cys133 together coordinate Zn(2+). 136–137 provides a ligand contact to ATP; sequence SY. Positions 150 and 153 each coordinate Zn(2+). 2 residues coordinate AMP: Arg160 and Arg171. Gln199 is an ATP binding site.

The protein belongs to the adenylate kinase family. In terms of assembly, monomer.

It localises to the cytoplasm. The catalysed reaction is AMP + ATP = 2 ADP. Its pathway is purine metabolism; AMP biosynthesis via salvage pathway; AMP from ADP: step 1/1. Its function is as follows. Catalyzes the reversible transfer of the terminal phosphate group between ATP and AMP. Plays an important role in cellular energy homeostasis and in adenine nucleotide metabolism. This chain is Adenylate kinase, found in Clostridium perfringens (strain ATCC 13124 / DSM 756 / JCM 1290 / NCIMB 6125 / NCTC 8237 / Type A).